The primary structure comprises 170 residues: Sec-independent protein translocase protein TATA, chloroplastic (170 aa).

The transit peptide at 1–61 directs the protein to the chloroplast; that stretch reads MGIPVVVPVA…GGSGGDLAAV (61 aa). The Lumenal portion of the chain corresponds to 62-84; that stretch reads AASVAARPRRAGSGGGGALGCKC. The chain crosses the membrane as a helical span at residues 85–105; the sequence is LFGLGVPELAVIAGVAALVFG. Over 106–170 the chain is Stromal; it reads PKQLPEIGRS…LEASSSKESA (65 aa). The span at 130-139 shows a compositional bias: basic and acidic residues; sequence FETELKKEPG. The interval 130-170 is disordered; the sequence is FETELKKEPGEGGDQPPPATPTAVSGGEEKGLEASSSKESA.

Belongs to the TatA/E family. In thylakoid membranes, TATC and TATB form a large receptor complex, containing about eight TATC-TATB pairs, which binds the precursor protein. Twin arginine signal peptide promotes pH-triggered docking of TATA oligomers to TATC-TATB receptor complex, inducing a conformational switch of TATA that results in activation of the translocase. TATA dissociates from TATC-TATB upon completion of translocation.

The protein resides in the plastid. It is found in the chloroplast thylakoid membrane. Its function is as follows. Part of the twin-arginine translocation (Tat) system that transports large folded proteins containing a characteristic twin-arginine motif in their signal peptide across the thylakoid membrane. Involved in delta pH-dependent protein transport required for chloroplast development, especially thylakoid membrane formation. TATC and TATB mediate precursor recognition, whereas TATA facilitates translocation. This is Sec-independent protein translocase protein TATA, chloroplastic from Zea mays (Maize).